We begin with the raw amino-acid sequence, 308 residues long: rRNA 2'-O-methyltransferase fibrillarin 1 (308 aa).

The tract at residues 1–68 (MRPPVTGGRG…PRGGMKGGSK (68 aa)) is disordered. A compositionally biased stretch (gly residues) spans 22–35 (GRGFGGGRSFGGGR). Residues 42–52 (SGPRGRGRGAP) are compositionally biased toward basic residues. The segment covering 53–65 (RGRGGPPRGGMKG) has biased composition (gly residues). S-adenosyl-L-methionine contacts are provided by residues 156–157 (TT), 175–176 (EF), 200–201 (DA), and 220–223 (DVAQ).

This sequence belongs to the methyltransferase superfamily. Fibrillarin family. In terms of assembly, component of box C/D small nucleolar ribonucleoprotein (snoRNP) particles. Interacts with SKP1A. Expressed in roots, leaves and flowers. Expressed in stems.

It localises to the nucleus. It is found in the nucleolus. The enzyme catalyses a ribonucleotide in rRNA + S-adenosyl-L-methionine = a 2'-O-methylribonucleotide in rRNA + S-adenosyl-L-homocysteine + H(+). The catalysed reaction is L-glutaminyl-[histone H2A] + S-adenosyl-L-methionine = N(5)-methyl-L-glutaminyl-[histone H2A] + S-adenosyl-L-homocysteine + H(+). Its function is as follows. S-adenosyl-L-methionine-dependent methyltransferase that has the ability to methylate both RNAs and proteins. Involved in pre-rRNA processing. Utilizes the methyl donor S-adenosyl-L-methionine to catalyze the site-specific 2'-hydroxyl methylation of ribose moieties in pre-ribosomal RNA. Site specificity is provided by a guide RNA that base pairs with the substrate. Methylation occurs at a characteristic distance from the sequence involved in base pairing with the guide RNA. Also acts as a protein methyltransferase by mediating methylation of 'Gln-105' of histone H2A (H2AQ105me), a modification that impairs binding of the FACT complex and is specifically present at 35S ribosomal DNA locus. Binds monophosphate phosphoinositides in vitro. This Arabidopsis thaliana (Mouse-ear cress) protein is rRNA 2'-O-methyltransferase fibrillarin 1.